Here is a 103-residue protein sequence, read N- to C-terminus: Histone H4 (103 aa).

Over residues 1–14 the composition is skewed to gly residues; that stretch reads MSGRGKGGKGLGKG. Residues 1–20 are disordered; sequence MSGRGKGGKGLGKGGAKRHR. An N-acetylserine modification is found at Ser-2. Residues Lys-6 and Lys-13 each carry the N6-acetyl-N6-methyllysine; alternate modification. Lys-17 is subject to N6-acetyllysine. The DNA-binding element occupies 17–21; the sequence is KRHRR.

It belongs to the histone H4 family. In terms of assembly, the nucleosome is a histone octamer containing two molecules each of H2A, H2B, H3 and H4 assembled in one H3-H4 heterotetramer and two H2A-H2B heterodimers. The octamer wraps approximately 147 bp of DNA.

Its subcellular location is the nucleus. The protein resides in the chromosome. In terms of biological role, core component of nucleosome. Nucleosomes wrap and compact DNA into chromatin, limiting DNA accessibility to the cellular machineries which require DNA as a template. Histones thereby play a central role in transcription regulation, DNA repair, DNA replication and chromosomal stability. DNA accessibility is regulated via a complex set of post-translational modifications of histones, also called histone code, and nucleosome remodeling. The sequence is that of Histone H4 from Mytilus chilensis (Chilean blue mussel).